Here is a 311-residue protein sequence, read N- to C-terminus: Tyrosine recombinase XerD (311 aa).

In terms of domain architecture, Core-binding (CB) spans 2–95; it reads KTLALQLQGY…AVRGLHRFAA (94 aa). In terms of domain architecture, Tyr recombinase spans 116-304; it reads RLPKSLTIDE…TVHALREVWA (189 aa). Active-site residues include Arg-160, Lys-184, His-256, Arg-259, and His-282. Residue Tyr-291 is the O-(3'-phospho-DNA)-tyrosine intermediate of the active site.

The protein belongs to the 'phage' integrase family. XerD subfamily. As to quaternary structure, forms a cyclic heterotetrameric complex composed of two molecules of XerC and two molecules of XerD.

The protein localises to the cytoplasm. Site-specific tyrosine recombinase, which acts by catalyzing the cutting and rejoining of the recombining DNA molecules. The XerC-XerD complex is essential to convert dimers of the bacterial chromosome into monomers to permit their segregation at cell division. It also contributes to the segregational stability of plasmids. In Mycobacterium tuberculosis (strain CDC 1551 / Oshkosh), this protein is Tyrosine recombinase XerD.